A 116-amino-acid polypeptide reads, in one-letter code: ATP-dependent Clp protease adapter protein ClpS (116 aa).

Over residues 1-11 the composition is skewed to polar residues; sequence MRRINTIMQGK. The interval 1-23 is disordered; the sequence is MRRINTIMQGKTNGGNGPESGTV.

The protein belongs to the ClpS family. As to quaternary structure, binds to the N-terminal domain of the chaperone ClpA.

Its function is as follows. Involved in the modulation of the specificity of the ClpAP-mediated ATP-dependent protein degradation. In Brucella abortus (strain S19), this protein is ATP-dependent Clp protease adapter protein ClpS.